The sequence spans 20 residues: Mu-conotoxin SIIIB (20 aa).

Position 1 is a pyrrolidone carboxylic acid (glutamine 1). Intrachain disulfides connect cysteine 3–cysteine 13, cysteine 4–cysteine 19, and cysteine 8–cysteine 20. Residue cysteine 20 is modified to Cysteine amide.

Expressed by the venom duct.

The protein localises to the secreted. In terms of biological role, mu-conotoxins block voltage-gated sodium channels (VGSC). Potently displaces (125)I-TIIIA from native rat brain Nav1.2/SCN2A (IC(50) is 5 nM) and muscle Nav1.4/SCN4A (IC(50) is 3 nM) VGSCs. Potently and irreversibly inhibits current through Xenopus oocyte-expressed Nav1.2/SCN2A and Nav1.4/SCN4A. This chain is Mu-conotoxin SIIIB, found in Conus striatus (Striated cone).